The primary structure comprises 500 residues: Lysine--tRNA ligase (500 aa).

Positions 410 and 417 each coordinate Mg(2+).

It belongs to the class-II aminoacyl-tRNA synthetase family. As to quaternary structure, homodimer. The cofactor is Mg(2+).

Its subcellular location is the cytoplasm. It catalyses the reaction tRNA(Lys) + L-lysine + ATP = L-lysyl-tRNA(Lys) + AMP + diphosphate. This is Lysine--tRNA ligase from Pseudomonas syringae pv. syringae (strain B728a).